Consider the following 78-residue polypeptide: RNA-binding protein KhpA (78 aa).

The KH domain occupies 29–78; the sequence is TIIYELTVAKGDIGKIIGKEGRTIKAIRTLLVSVASRDNVKVSLEIMEER.

It belongs to the KhpA RNA-binding protein family.

Its subcellular location is the cytoplasm. Functionally, a probable RNA-binding protein. The polypeptide is RNA-binding protein KhpA (Chlamydia trachomatis serovar D (strain ATCC VR-885 / DSM 19411 / UW-3/Cx)).